The primary structure comprises 312 residues: uncharacterized protein (312 aa).

112 to 118 (LIGLPMV) contributes to the ATP binding site.

This sequence belongs to the MurCDEF family.

This is an uncharacterized protein from Methanothermobacter thermautotrophicus (strain ATCC 29096 / DSM 1053 / JCM 10044 / NBRC 100330 / Delta H) (Methanobacterium thermoautotrophicum).